The chain runs to 650 residues: Macrolide export ATP-binding/permease protein MacB (650 aa).

The region spanning 9–248 (IELIDLERVF…RPLGRPPGGA (240 aa)) is the ABC transporter domain. Residue 45 to 52 (GQSGSGKS) coordinates ATP. Helical transmembrane passes span 276–296 (ALTL…MAIG), 525–545 (LTLL…IGVM), 580–600 (AVAV…GAAL), and 615–635 (PPIV…YLPA).

Belongs to the ABC transporter superfamily. Macrolide exporter (TC 3.A.1.122) family. In terms of assembly, homodimer.

The protein resides in the cell inner membrane. In terms of biological role, non-canonical ABC transporter that contains transmembrane domains (TMD), which form a pore in the inner membrane, and an ATP-binding domain (NBD), which is responsible for energy generation. Confers resistance against macrolides. This chain is Macrolide export ATP-binding/permease protein MacB, found in Rhodospirillum rubrum (strain ATCC 11170 / ATH 1.1.1 / DSM 467 / LMG 4362 / NCIMB 8255 / S1).